The following is a 541-amino-acid chain: MHHHPITLLSLLLGAAQSIAAHPTAHDERRSSSSIGVSASVPDDAALPVLHPFVSFSIEFAFFPDFAGNLSHPNLFSNQLLDNLADLQGAKPYIRVGGNTQDFALYDPKLRAATNATYITSISTDYPLILSFGPAFFESYFTWPGTKFIHGFNLGKNSSSDIELMLESVPLACKALEGGKLAYWELGNEPDLYKTSAQGIRRPASWTEQDYVDEWLNKTARIEKRLVEACPELAESKYIAPSFAGVTNSLNPVVTWEKGLDKSRNIALNSEHNYIGGATQPGVTLQNTLMNHTKTVESVAQQVNVSRILSKDNLTPGIPYILGETNSLYNEGAPGLSNSFGAALWGVDFNLYCASQNIRRTHMHQGSNYNYISWQPVGTNRTTIGTKAPYYGNAMVAAMLHGGDDVRIVNLPLAADTEAAYAAYVNETLVRVAVINLVEFNYTSTDSTAEKVESRPSAKYTFQLPSSESVYAGSVSVQRLMANGSNAITGITWDGWSYNYELAQGKPVRLQNVTTGEAISVGDDGVVEIEIPYSSAAILSL.

The signal sequence occupies residues 1–20 (MHHHPITLLSLLLGAAQSIA). N-linked (GlcNAc...) asparagine glycosylation is found at Asn69, Asn115, and Asn157. The Proton donor role is filled by Glu208. Asn217, Asn291, and Asn304 each carry an N-linked (GlcNAc...) asparagine glycan. Catalysis depends on Glu324, which acts as the Nucleophile. Residues Asn380, Asn426, Asn441, Asn483, and Asn512 are each glycosylated (N-linked (GlcNAc...) asparagine).

It belongs to the glycosyl hydrolase 79 family. Post-translationally, N-glycosylated.

The protein localises to the secreted. The catalysed reaction is a beta-D-glucuronoside + H2O = D-glucuronate + an alcohol. Functionally, beta-glucuronidase that hydrolyzes beta-glucuronosyl and 4-O-methyl-beta-glucuronosyl residues of arabinogalactan-protein. Hydrolyzed heparan sulfate only very weakly. Has no activity on xylan from birchwood. Able to catalyze the transglycosylation of glucuronic acid (GlcA) residues from p-nitrophenyl-beta-glucuronic acid (PNP beta-GlcA) to various monosaccharide acceptors such as glucose, galactose and xylose. The protein is Beta-glucuronidase of Aspergillus niger (strain ATCC MYA-4892 / CBS 513.88 / FGSC A1513).